Reading from the N-terminus, the 201-residue chain is Holliday junction branch migration complex subunit RuvA (201 aa).

The tract at residues 1-64 (MFNSISGILS…EDQMRLFGFP (64 aa)) is domain I. The domain II stretch occupies residues 65-140 (NQAERSLFLD…KLTNLNEVSS (76 aa)). The flexible linker stretch occupies residues 140–144 (SKGQA). The domain III stretch occupies residues 145-201 (SVSCEYEDIVTALTEMGFERKSVIVQVEKIAEEMKAAGSDPLKNEEELFRRSIVALS).

The protein belongs to the RuvA family. In terms of assembly, homotetramer. Forms an RuvA(8)-RuvB(12)-Holliday junction (HJ) complex. HJ DNA is sandwiched between 2 RuvA tetramers; dsDNA enters through RuvA and exits via RuvB. An RuvB hexamer assembles on each DNA strand where it exits the tetramer. Each RuvB hexamer is contacted by two RuvA subunits (via domain III) on 2 adjacent RuvB subunits; this complex drives branch migration. In the full resolvosome a probable DNA-RuvA(4)-RuvB(12)-RuvC(2) complex forms which resolves the HJ.

The protein resides in the cytoplasm. The RuvA-RuvB-RuvC complex processes Holliday junction (HJ) DNA during genetic recombination and DNA repair, while the RuvA-RuvB complex plays an important role in the rescue of blocked DNA replication forks via replication fork reversal (RFR). RuvA specifically binds to HJ cruciform DNA, conferring on it an open structure. The RuvB hexamer acts as an ATP-dependent pump, pulling dsDNA into and through the RuvAB complex. HJ branch migration allows RuvC to scan DNA until it finds its consensus sequence, where it cleaves and resolves the cruciform DNA. The sequence is that of Holliday junction branch migration complex subunit RuvA from Treponema denticola (strain ATCC 35405 / DSM 14222 / CIP 103919 / JCM 8153 / KCTC 15104).